A 188-amino-acid polypeptide reads, in one-letter code: Nicotinamide-nucleotide adenylyltransferase (188 aa).

The segment at 166 to 188 (SDSLERYAATGESLPESLDDLDD) is disordered.

The protein belongs to the archaeal NMN adenylyltransferase family.

The protein resides in the cytoplasm. It catalyses the reaction beta-nicotinamide D-ribonucleotide + ATP + H(+) = diphosphate + NAD(+). Its pathway is cofactor biosynthesis; NAD(+) biosynthesis; NAD(+) from nicotinamide D-ribonucleotide: step 1/1. This is Nicotinamide-nucleotide adenylyltransferase from Haloarcula marismortui (strain ATCC 43049 / DSM 3752 / JCM 8966 / VKM B-1809) (Halobacterium marismortui).